A 141-amino-acid chain; its full sequence is Large ribosomal subunit protein uL11 (141 aa).

It belongs to the universal ribosomal protein uL11 family. In terms of assembly, part of the ribosomal stalk of the 50S ribosomal subunit. Interacts with L10 and the large rRNA to form the base of the stalk. L10 forms an elongated spine to which L12 dimers bind in a sequential fashion forming a multimeric L10(L12)X complex. In terms of processing, one or more lysine residues are methylated.

Forms part of the ribosomal stalk which helps the ribosome interact with GTP-bound translation factors. In Bacillus cereus (strain ATCC 10987 / NRS 248), this protein is Large ribosomal subunit protein uL11.